The primary structure comprises 525 residues: Probable protein kinase UbiB (525 aa).

The 383-residue stretch at 119–501 folds into the Protein kinase domain; the sequence is RFDHHPVASA…QRRTNRLLSA (383 aa). Residues 125–133 and K151 each bind ATP; that span reads VASASIAQV. The active-site Proton acceptor is D286. The chain crosses the membrane as a helical span at residues 502-522; it reads ALLFIGGFAVGIIATHVLAWL.

It belongs to the ABC1 family. UbiB subfamily.

The protein resides in the cell inner membrane. It participates in cofactor biosynthesis; ubiquinone biosynthesis [regulation]. Is probably a protein kinase regulator of UbiI activity which is involved in aerobic coenzyme Q (ubiquinone) biosynthesis. The polypeptide is Probable protein kinase UbiB (Ralstonia nicotianae (strain ATCC BAA-1114 / GMI1000) (Ralstonia solanacearum)).